The chain runs to 179 residues: Stathmin-2 (179 aa).

The segment at 1–26 (MAKTAMAYKEKMKELSMLSLICSCFY) is membrane attachment. Phosphoserine occurs at positions 16, 50, 62, 73, 80, and 97. The region spanning 38 to 179 (DDMEVKQINK…NKELQVELSG (142 aa)) is the SLD domain. A regulatory/phosphorylation domain region spans residues 39–96 (DMEVKQINKRASGQAFELILKPPSPVSEAPRTLASPKKKELSLEEIQKKLEAAEERRK). A coiled-coil region spans residues 74-179 (PKKKELSLEE…NKELQVELSG (106 aa)).

It belongs to the stathmin family. In terms of tissue distribution, expression is neuron-specific and found in cerebellum, forebrain, midbrain, tectum and spinal cord.

It is found in the cytoplasm. Its subcellular location is the perinuclear region. The protein resides in the cell projection. It localises to the growth cone. The protein localises to the membrane. It is found in the axon. Its subcellular location is the lamellipodium. Is a key regulator of neurite extension through regulation of microtubule instabilily. The protein is Stathmin-2 (STMN2) of Gallus gallus (Chicken).